The chain runs to 236 residues: Ubiquinone biosynthesis O-methyltransferase (236 aa).

Residues Arg-39, Gly-59, Asp-80, and Met-124 each coordinate S-adenosyl-L-methionine.

It belongs to the methyltransferase superfamily. UbiG/COQ3 family.

The catalysed reaction is a 3-demethylubiquinol + S-adenosyl-L-methionine = a ubiquinol + S-adenosyl-L-homocysteine + H(+). It catalyses the reaction a 3-(all-trans-polyprenyl)benzene-1,2-diol + S-adenosyl-L-methionine = a 2-methoxy-6-(all-trans-polyprenyl)phenol + S-adenosyl-L-homocysteine + H(+). It functions in the pathway cofactor biosynthesis; ubiquinone biosynthesis. O-methyltransferase that catalyzes the 2 O-methylation steps in the ubiquinone biosynthetic pathway. The chain is Ubiquinone biosynthesis O-methyltransferase from Shewanella sp. (strain MR-7).